We begin with the raw amino-acid sequence, 169 residues long: N-alpha-acetyltransferase 50 (169 aa).

The N-acetyltransferase domain maps to 6–155 (IELGDVTPHN…DAHVLQKNLK (150 aa)). Position 12 is a phosphothreonine (Thr-12). Residue Tyr-31 coordinates substrate. An N6-acetyllysine mark is found at Lys-34 and Lys-37. Tyr-73 is an active-site residue. Met-75 lines the substrate pocket. Residue 77-90 (LGCLAPYRRLGIGT) participates in acetyl-CoA binding. A Phosphotyrosine modification is found at Tyr-110. His-112 is a catalytic residue. 117–126 (NESAIDFYRK) serves as a coordination point for CoA. Residues 138-141 (YYKR) are substrate. Lys-140 bears the N6-acetyllysine mark.

The protein belongs to the acetyltransferase family. GNAT subfamily. In terms of assembly, component of the N-terminal acetyltransferase E (NatE) complex at least composed of NAA10, NAA15 and NAA50. Interacts with NAA10. Interacts with NAA15. Predominantly interacts with NAA15 in the N-terminal acetyltransferase A complex (NatA complex); the interactions reduce the acetylation activity of the NatA complex. Component of the N-terminal acetyltransferase E (NatE)/HYPK complex at least composed of NAA10, NAA15, NAA50 and HYPK. Within the complex interacts with NAA15. Its capacity to interact with the NatA complex is reduced by HYPK. Interacts with NAA35.

It is found in the cytoplasm. The protein localises to the nucleus. It carries out the reaction N-terminal L-methionyl-L-alanyl-[protein] + acetyl-CoA = N-terminal N(alpha)-acetyl-L-methionyl-L-alanyl-[protein] + CoA + H(+). It catalyses the reaction N-terminal L-methionyl-L-seryl-[protein] + acetyl-CoA = N-terminal N(alpha)-acetyl-L-methionyl-L-seryl-[protein] + CoA + H(+). The enzyme catalyses N-terminal L-methionyl-L-valyl-[protein] + acetyl-CoA = N-terminal N(alpha)-acetyl-L-methionyl-L-valyl-[protein] + CoA + H(+). The catalysed reaction is N-terminal L-methionyl-L-threonyl-[protein] + acetyl-CoA = N-terminal N(alpha)-acetyl-L-methionyl-L-threonyl-[protein] + CoA + H(+). It carries out the reaction N-terminal L-methionyl-L-lysyl-[protein] + acetyl-CoA = N-terminal N(alpha)-acetyl-L-methionyl-L-lysyl-[protein] + CoA + H(+). It catalyses the reaction N-terminal L-methionyl-L-leucyl-[protein] + acetyl-CoA = N-terminal N(alpha)-acetyl-L-methionyl-L-leucyl-[protein] + CoA + H(+). The enzyme catalyses N-terminal L-methionyl-L-phenylalanyl-[protein] + acetyl-CoA = N-terminal N(alpha)-acetyl-L-methionyl-L-phenylalanyl-[protein] + CoA + H(+). The catalysed reaction is N-terminal L-methionyl-L-tyrosyl-[protein] + acetyl-CoA = N-terminal N(alpha)-acetyl-L-methionyl-L-tyrosyl-[protein] + CoA + H(+). In terms of biological role, N-alpha-acetyltransferase that acetylates the N-terminus of proteins that retain their initiating methionine. Has a broad substrate specificity: able to acetylate the initiator methionine of most peptides, except for those with a proline in second position. Also displays N-epsilon-acetyltransferase activity by mediating acetylation of the side chain of specific lysines on proteins. Autoacetylates in vivo. The relevance of N-epsilon-acetyltransferase activity is however unclear: able to acetylate H4 in vitro, but this result has not been confirmed in vivo. Component of N-alpha-acetyltransferase complexes containing NAA10 and NAA15, which has N-alpha-acetyltransferase activity. Does not influence the acetyltransferase activity of NAA10. However, it negatively regulates the N-alpha-acetyltransferase activity of the N-terminal acetyltransferase A complex (also called the NatA complex). The multiprotein complexes probably constitute the major contributor for N-terminal acetylation at the ribosome exit tunnel, with NAA10 acetylating all amino termini that are devoid of methionine and NAA50 acetylating other peptides. Required for sister chromatid cohesion during mitosis by promoting binding of CDCA5/sororin to cohesin: may act by counteracting the function of NAA10. This is N-alpha-acetyltransferase 50 from Mus musculus (Mouse).